We begin with the raw amino-acid sequence, 187 residues long: Calmodulin-like protein 30 (187 aa).

Residues K21–S47 are disordered. Residues S32 to S47 show a composition bias toward low complexity. EF-hand domains follow at residues P46 to E81, R82 to I117, F129 to R152, and C153 to V187. The Ca(2+) site is built by D59, D61, D63, K65, E70, D95, D97, D99, E106, D130, N132, D134, K136, E141, D166, D168, D170, and E177.

This sequence belongs to the calmodulin family.

In terms of biological role, potential calcium sensor. The protein is Calmodulin-like protein 30 of Arabidopsis thaliana (Mouse-ear cress).